The following is an 89-amino-acid chain: Small ribosomal subunit protein uS15 (89 aa).

The protein belongs to the universal ribosomal protein uS15 family. As to quaternary structure, part of the 30S ribosomal subunit. Forms a bridge to the 50S subunit in the 70S ribosome, contacting the 23S rRNA.

Its function is as follows. One of the primary rRNA binding proteins, it binds directly to 16S rRNA where it helps nucleate assembly of the platform of the 30S subunit by binding and bridging several RNA helices of the 16S rRNA. Functionally, forms an intersubunit bridge (bridge B4) with the 23S rRNA of the 50S subunit in the ribosome. The protein is Small ribosomal subunit protein uS15 of Yersinia pseudotuberculosis serotype O:1b (strain IP 31758).